A 454-amino-acid polypeptide reads, in one-letter code: 3-phosphoshikimate 1-carboxyvinyltransferase (454 aa).

Residues Lys39, Ser40, and Arg44 each coordinate 3-phosphoshikimate. Lys39 is a phosphoenolpyruvate binding site. 2 residues coordinate phosphoenolpyruvate: Gly112 and Arg140. Residues Ser185, Gln187, Asp333, and Lys360 each contribute to the 3-phosphoshikimate site. Phosphoenolpyruvate is bound at residue Gln187. Asp333 acts as the Proton acceptor in catalysis. 2 residues coordinate phosphoenolpyruvate: Arg364 and Arg405.

Belongs to the EPSP synthase family. In terms of assembly, monomer.

The protein localises to the cytoplasm. It catalyses the reaction 3-phosphoshikimate + phosphoenolpyruvate = 5-O-(1-carboxyvinyl)-3-phosphoshikimate + phosphate. Its pathway is metabolic intermediate biosynthesis; chorismate biosynthesis; chorismate from D-erythrose 4-phosphate and phosphoenolpyruvate: step 6/7. In terms of biological role, catalyzes the transfer of the enolpyruvyl moiety of phosphoenolpyruvate (PEP) to the 5-hydroxyl of shikimate-3-phosphate (S3P) to produce enolpyruvyl shikimate-3-phosphate and inorganic phosphate. This chain is 3-phosphoshikimate 1-carboxyvinyltransferase, found in Xylella fastidiosa (strain 9a5c).